We begin with the raw amino-acid sequence, 263 residues long: Phosphate import ATP-binding protein PstB (263 aa).

The ABC transporter domain occupies 16-258; that stretch reads VTARNVTVSY…PRDTRTQDYI (243 aa). Position 48–55 (48–55) interacts with ATP; that stretch reads GPSGCGKS.

The protein belongs to the ABC transporter superfamily. Phosphate importer (TC 3.A.1.7) family. The complex is composed of two ATP-binding proteins (PstB), two transmembrane proteins (PstC and PstA) and a solute-binding protein (PstS).

It localises to the cell inner membrane. The enzyme catalyses phosphate(out) + ATP + H2O = ADP + 2 phosphate(in) + H(+). Its function is as follows. Part of the ABC transporter complex PstSACB involved in phosphate import. Responsible for energy coupling to the transport system. The sequence is that of Phosphate import ATP-binding protein PstB from Maricaulis maris (strain MCS10) (Caulobacter maris).